A 1131-amino-acid polypeptide reads, in one-letter code: Phytochrome B1 (1131 aa).

Basic residues predominate over residues 1–11; the sequence is MASGSRTKHSY. The tract at residues 1–26 is disordered; it reads MASGSRTKHSYHNSSQGQAQSSGTSN. The segment covering 14–25 has biased composition (low complexity); the sequence is SSQGQAQSSGTS. One can recognise a GAF domain in the interval 229–408; it reads DIKLLCDTVV…AFGLQLNMEL (180 aa). Cysteine 334 is a phytochromobilin binding site. PAS domains are found at residues 622-693 and 756-808; these read VARE…LRGV and DYKA…GEIF. One can recognise a Histidine kinase domain in the interval 904 to 1124; sequence YICQEVKSPL…MIILDLPMTR (221 aa).

This sequence belongs to the phytochrome family. Homodimer. Post-translationally, contains one covalently linked phytochromobilin chromophore.

Functionally, regulatory photoreceptor which exists in two forms that are reversibly interconvertible by light: the Pr form that absorbs maximally in the red region of the spectrum and the Pfr form that absorbs maximally in the far-red region. Photoconversion of Pr to Pfr induces an array of morphogenic responses, whereas reconversion of Pfr to Pr cancels the induction of those responses. Pfr controls the expression of a number of nuclear genes including those encoding the small subunit of ribulose-bisphosphate carboxylase, chlorophyll A/B binding protein, protochlorophyllide reductase, rRNA, etc. It also controls the expression of its own gene(s) in a negative feedback fashion. The polypeptide is Phytochrome B1 (Solanum lycopersicum (Tomato)).